The following is a 571-amino-acid chain: Proline--tRNA ligase (571 aa).

It belongs to the class-II aminoacyl-tRNA synthetase family. ProS type 1 subfamily. As to quaternary structure, homodimer.

It localises to the cytoplasm. The enzyme catalyses tRNA(Pro) + L-proline + ATP = L-prolyl-tRNA(Pro) + AMP + diphosphate. Its function is as follows. Catalyzes the attachment of proline to tRNA(Pro) in a two-step reaction: proline is first activated by ATP to form Pro-AMP and then transferred to the acceptor end of tRNA(Pro). As ProRS can inadvertently accommodate and process non-cognate amino acids such as alanine and cysteine, to avoid such errors it has two additional distinct editing activities against alanine. One activity is designated as 'pretransfer' editing and involves the tRNA(Pro)-independent hydrolysis of activated Ala-AMP. The other activity is designated 'posttransfer' editing and involves deacylation of mischarged Ala-tRNA(Pro). The misacylated Cys-tRNA(Pro) is not edited by ProRS. The protein is Proline--tRNA ligase of Shewanella baltica (strain OS195).